A 263-amino-acid polypeptide reads, in one-letter code: Linear gramicidin dehydrogenase LgrE (263 aa).

S96 is an active-site residue.

The protein belongs to the thioesterase family.

In the final step of gramicidin biosynthesis, reduces the pentadecapeptide-aldehyde intermediate, that is released from the terminal module of the non-ribosomal peptide synthetase LgrD, to the final product ethanolamine-containing gramicidin. The polypeptide is Linear gramicidin dehydrogenase LgrE (lgrE) (Brevibacillus parabrevis).